The following is a 466-amino-acid chain: 3-isopropylmalate dehydratase large subunit (466 aa).

3 residues coordinate [4Fe-4S] cluster: Cys-345, Cys-405, and Cys-408.

The protein belongs to the aconitase/IPM isomerase family. LeuC type 1 subfamily. As to quaternary structure, heterodimer of LeuC and LeuD. [4Fe-4S] cluster is required as a cofactor.

It catalyses the reaction (2R,3S)-3-isopropylmalate = (2S)-2-isopropylmalate. The protein operates within amino-acid biosynthesis; L-leucine biosynthesis; L-leucine from 3-methyl-2-oxobutanoate: step 2/4. Catalyzes the isomerization between 2-isopropylmalate and 3-isopropylmalate, via the formation of 2-isopropylmaleate. The protein is 3-isopropylmalate dehydratase large subunit of Microcystis aeruginosa (strain NIES-843 / IAM M-2473).